Reading from the N-terminus, the 982-residue chain is Mineralocorticoid receptor (982 aa).

Residues 1–601 (METKGYHSLP…STGSSRPSKI (601 aa)) are modulating. The segment covering 230–242 (QGTPLTCSPNVEN) has biased composition (polar residues). 2 disordered regions span residues 230–328 (QGTP…AAST) and 345–375 (SGTS…PFPK). Phosphoserine is present on residues S249, S258, S282, S286, and S298. Low complexity predominate over residues 258–299 (SPLSSPLSSMKSSISSPPSHCSVKSPVSSPNNVTPRSSVSSP). Polar residues predominate over residues 300 to 328 (ANINNSRCSVSSPSNTNNRSTLSSPAAST). The segment covering 345-354 (SGTSAGSSTS) has biased composition (low complexity). Zn(2+) is bound by residues C602, C605, C619, C622, C638, C644, C654, and C657. 2 consecutive NR C4-type zinc fingers follow at residues 602–622 (CLVC…CGSC) and 638–662 (CAGR…LQKC). Positions 602-667 (CLVCGDEASG…RLQKCLQAGM (66 aa)) form a DNA-binding region, nuclear receptor. The hinge stretch occupies residues 668 to 723 (NLGARRSKKLGKLKGIHEEQPQQQPPPPPPPPQSPEEGTTYIAPAKEPSVNTALVP). Residues 682 to 708 (GIHEEQPQQQPPPPPPPPQSPEEGTTY) form a disordered region. A compositionally biased stretch (pro residues) spans 690–701 (QQPPPPPPPPQS). The NR LBD domain maps to 724–962 (QLSAISRALT…EFPAMLVEII (239 aa)). N768 and Q774 together coordinate 21-hydroxyprogesterone. Aldosterone is bound by residues N768 and Q774. 2 residues coordinate progesterone: N768 and Q774. The interval 780–783 (KWAK) is important for coactivator binding. 21-hydroxyprogesterone is bound by residues R815 and T943. Residues R815 and T943 each contribute to the aldosterone site. Progesterone contacts are provided by R815 and T943.

It belongs to the nuclear hormone receptor family. NR3 subfamily. In terms of processing, phosphorylated. In terms of tissue distribution, expressed in hippocampus, being restricted to the more superficial cortical layers.

The protein localises to the cytoplasm. It is found in the nucleus. In terms of biological role, receptor for both mineralocorticoids (MC) such as aldosterone and glucocorticoids (GC) such as corticosterone or cortisol. Binds to mineralocorticoid response elements (MRE) and transactivates target genes. The effect of MC is to increase ion and water transport and thus raise extracellular fluid volume and blood pressure and lower potassium levels. The protein is Mineralocorticoid receptor (NR3C2) of Saimiri sciureus (Common squirrel monkey).